An 899-amino-acid polypeptide reads, in one-letter code: Protein suppressor of hairy wing (899 aa).

3 disordered regions span residues 1-33, 45-127, and 171-206; these read MSAQ…RTGT, AAVA…KKMD, and AKEN…AKRR. Basic and acidic residues predominate over residues 21-31; the sequence is SDGDKPKEKRT. Over residues 45–55 the composition is skewed to low complexity; it reads AAVASKGASVS. 2 stretches are compositionally biased toward polar residues: residues 67–83 and 102–111; these read KILN…STKG and RSSAPASSAV. Over residues 183–198 the composition is skewed to acidic residues; that stretch reads VDEDDDDDDDDEDEGV. Residues 218–240 form a C2H2-type 1; atypical zinc finger; that stretch reads HVCGKCYKTFRRVKSLKKHLEFC. Residues 288–311 form a C2H2-type 2 zinc finger; that stretch reads INCPDCPKSFKTQTSYERHIFITH. Residues 318 to 340 form a C2H2-type 3; atypical zinc finger; that stretch reads YPCSICNAKLRSGALLKLHEQQH. C2H2-type zinc fingers lie at residues 347–365, 379–401, 412–434, 440–462, 468–490, 496–518, 522–544, 552–576, and 594–617; these read FACK…LKCH, MSCK…LKQH, YMCH…IRTH, FDCD…RRYH, YTCT…MKRH, HKCN…SKTH, YACS…VKDH, FACT…AGDH, and TDCA…RSVH. Disordered regions lie at residues 646–665, 702–734, and 865–899; these read EQKE…GSLI, PLEG…VVKK, and GDED…ESEA. Residues 874 to 899 are compositionally biased toward basic and acidic residues; sequence ETDKGKDREADNTDTDTREDAVESEA.

The protein resides in the nucleus. Its function is as follows. Component of the gypsy chromatin insulator complex which is required for the function of the gypsy chromatin insulator and other endogenous chromatin insulators. Chromatin insulators are regulatory elements which establish independent domains of transcriptional activity within eukaryotic genomes. Insulators have two defining properties; they can block the communication between an enhancer and a promoter when placed between them and can also buffer transgenes from position effect variegation (PEV). Insulators are proposed to structure the chromatin fiber into independent domains of differing transcriptional potential by promoting the formation of distinct chromatin loops. This chromatin looping may involve the formation of insulator bodies, where homotypic interactions between individual subunits of the insulator complex could promote the clustering of widely spaced insulators at the nuclear periphery. Within the gypsy insulator complex, this protein binds specifically to a region of the gypsy element located 3' of the 5' long terminal repeat (LTR), and may also mediate interaction with other endogenous insulators at sites distinct from those recognized by Cp190. Cooperates with pita and cliff to recruit Cp190 and regulate insulator function at the front-ultraabdominal (Fub) boundary. The chain is Protein suppressor of hairy wing (su(Hw)) from Drosophila virilis (Fruit fly).